We begin with the raw amino-acid sequence, 98 residues long: NADH-ubiquinone oxidoreductase chain 4L (98 aa).

A run of 3 helical transmembrane segments spans residues 1–21, 29–49, and 61–81; these read MSLV…GLLM, SLLC…LTIL, and IILL…LVMV.

It belongs to the complex I subunit 4L family. Core subunit of respiratory chain NADH dehydrogenase (Complex I) which is composed of 45 different subunits.

The protein resides in the mitochondrion inner membrane. The enzyme catalyses a ubiquinone + NADH + 5 H(+)(in) = a ubiquinol + NAD(+) + 4 H(+)(out). Functionally, core subunit of the mitochondrial membrane respiratory chain NADH dehydrogenase (Complex I) which catalyzes electron transfer from NADH through the respiratory chain, using ubiquinone as an electron acceptor. Part of the enzyme membrane arm which is embedded in the lipid bilayer and involved in proton translocation. In Elaphodus cephalophus (Tufted deer), this protein is NADH-ubiquinone oxidoreductase chain 4L (MT-ND4L).